Reading from the N-terminus, the 399-residue chain is Glutamyl-tRNA reductase (399 aa).

Substrate contacts are provided by residues 45-48, serine 101, 106-108, and glutamine 112; these read TCNR and EDQ. Catalysis depends on cysteine 46, which acts as the Nucleophile. An NADP(+)-binding site is contributed by 177–182; sequence GFGKIG.

The protein belongs to the glutamyl-tRNA reductase family. Homodimer.

The enzyme catalyses (S)-4-amino-5-oxopentanoate + tRNA(Glu) + NADP(+) = L-glutamyl-tRNA(Glu) + NADPH + H(+). It functions in the pathway porphyrin-containing compound metabolism; protoporphyrin-IX biosynthesis; 5-aminolevulinate from L-glutamyl-tRNA(Glu): step 1/2. Catalyzes the NADPH-dependent reduction of glutamyl-tRNA(Glu) to glutamate 1-semialdehyde (GSA). This chain is Glutamyl-tRNA reductase, found in Clostridium kluyveri (strain ATCC 8527 / DSM 555 / NBRC 12016 / NCIMB 10680 / K1).